Here is a 146-residue protein sequence, read N- to C-terminus: Hemoglobin subunit beta-1/2 (146 aa).

Valine 1 is subject to N-acetylvaline. A Globin domain is found at 2–146 (HLTGEEKSGL…VANALAHKYH (145 aa)). Threonine 12 carries the post-translational modification Phosphothreonine. Position 59 is an N6-acetyllysine (lysine 59). Residue histidine 63 participates in heme b binding. At lysine 82 the chain carries N6-acetyllysine. Residue histidine 92 coordinates heme b. S-nitrosocysteine is present on cysteine 93. Lysine 144 bears the N6-acetyllysine mark.

This sequence belongs to the globin family. As to quaternary structure, heterotetramer of two alpha chains and two beta chains. In terms of tissue distribution, red blood cells.

In terms of biological role, involved in oxygen transport from the lung to the various peripheral tissues. The sequence is that of Hemoglobin subunit beta-1/2 (HBB) from Physeter macrocephalus (Sperm whale).